The primary structure comprises 231 residues: MAKLTKRQKAIAAKVEAGKAYTFEEAASLLAELSAVKFTESFDVAVNLGVDPRKSDQVVRGATVLPNGTGKTVRVAVFTQGPGAEAALAAGADKVGMDDLAAEMKAGDLNYDVVIASPDAMRVVGQLGQVLGPRGLMPNPKVGTVTPDVATAVKNAKAGQVRFRTDKNGIIHTSVGKVGFEAAALKQNVEALLADLKRLKPSTSKGIYVKRVTLSTTMGPGLIIDQASLDA.

Belongs to the universal ribosomal protein uL1 family. In terms of assembly, part of the 50S ribosomal subunit.

Functionally, binds directly to 23S rRNA. The L1 stalk is quite mobile in the ribosome, and is involved in E site tRNA release. Its function is as follows. Protein L1 is also a translational repressor protein, it controls the translation of the L11 operon by binding to its mRNA. The polypeptide is Large ribosomal subunit protein uL1 (Ectopseudomonas mendocina (strain ymp) (Pseudomonas mendocina)).